A 444-amino-acid chain; its full sequence is Protein CPn_0808/CP_1063/CPj0808/CpB0837 (444 aa).

A compositionally biased stretch (polar residues) spans 1 to 13 (MTSGVSGSSSQDP). Positions 1-124 (MTSGVSGSSS…NNYDSPSLPT (124 aa)) are disordered. A compositionally biased stretch (low complexity) spans 15-24 (LAAQLAQSSQ). Positions 25–42 (KAGNAQSGHDTKNVTKQG) are enriched in polar residues. Residues 77–86 (SKGEKSEKSG) show a composition bias toward basic and acidic residues. Residues 88–103 (SKSSTSVASASETATA) are compositionally biased toward low complexity. Positions 113 to 124 (RQNNYDSPSLPT) are enriched in polar residues.

This sequence belongs to the chlamydial CPn_0808/CT_579/TC_0868 family.

In Chlamydia pneumoniae (Chlamydophila pneumoniae), this protein is Protein CPn_0808/CP_1063/CPj0808/CpB0837.